A 282-amino-acid chain; its full sequence is Glutamyl endopeptidase (282 aa).

A signal peptide spans 1-27 (MKKRFLSICTMTIAALATTTMVNTSYA). Positions 28–66 (KTDTESHNHSSLGTENKNVLDINSSSHNIKPSQNKSYPS) are excised as a propeptide. Catalysis depends on charge relay system residues His-117, Asp-159, and Ser-235.

It belongs to the peptidase S1B family.

The protein localises to the secreted. The catalysed reaction is Preferential cleavage: Glu-|-Xaa, Asp-|-Xaa.. In terms of biological role, exhibits a significant hydrolytic activity for the carbonyl side of glutamic acid. Shows activity toward human fibronectin and type 1 collagen. In Staphylococcus epidermidis (strain ATCC 35984 / DSM 28319 / BCRC 17069 / CCUG 31568 / BM 3577 / RP62A), this protein is Glutamyl endopeptidase (gseA).